Reading from the N-terminus, the 775-residue chain is 5-methyltetrahydropteroyltriglutamate--homocysteine methyltransferase (775 aa).

5-methyltetrahydropteroyltri-L-glutamate-binding positions include 15 to 18 (RELK) and lysine 118. Residues 448-450 (IGS) and glutamate 501 contribute to the L-homocysteine site. L-methionine-binding positions include 448–450 (IGS) and glutamate 501. 5-methyltetrahydropteroyltri-L-glutamate is bound by residues 532–533 (RC) and tryptophan 578. Residue aspartate 616 participates in L-homocysteine binding. Aspartate 616 is an L-methionine binding site. Glutamate 622 is a 5-methyltetrahydropteroyltri-L-glutamate binding site. Residues histidine 658, cysteine 660, and glutamate 682 each contribute to the Zn(2+) site. Histidine 711 acts as the Proton donor in catalysis. Residue cysteine 743 participates in Zn(2+) binding.

The protein belongs to the vitamin-B12 independent methionine synthase family. Zn(2+) serves as cofactor.

The catalysed reaction is 5-methyltetrahydropteroyltri-L-glutamate + L-homocysteine = tetrahydropteroyltri-L-glutamate + L-methionine. The protein operates within amino-acid biosynthesis; L-methionine biosynthesis via de novo pathway; L-methionine from L-homocysteine (MetE route): step 1/1. Catalyzes the transfer of a methyl group from 5-methyltetrahydrofolate to homocysteine resulting in methionine formation. This Cytophaga hutchinsonii (strain ATCC 33406 / DSM 1761 / CIP 103989 / NBRC 15051 / NCIMB 9469 / D465) protein is 5-methyltetrahydropteroyltriglutamate--homocysteine methyltransferase.